Reading from the N-terminus, the 315-residue chain is BTB/POZ domain-containing adapter for CUL3-mediated RhoA degradation protein 3 (315 aa).

At methionine 1 the chain carries N-acetylmethionine. A Phosphoserine modification is found at serine 23. Residues 32–100 enclose the BTB domain; sequence KYVKLNVGGA…LRDGAVPLPE (69 aa). The short motif at 239–245 is the Interaction with PCNA element; the sequence is QTKVEFP. The disordered stretch occupies residues 269 to 294; that stretch reads NALLEATGGAAGRSHHLDEDEERERE.

This sequence belongs to the BACURD family. Homotetramer; forms a two-fold symmetric tetramer in solution. Interacts with CUL3; interaction is direct and forms a 5:5 heterodecamer. Component of the BCR(BACURD3) E3 ubiquitin ligase complex, at least composed of CUL3, KCTD10/BACURD3 and RBX1. Interacts with DNA polymerase delta subunit 2/POLD2. Interacts with PCNA. In terms of tissue distribution, expressed at highest levels in lung. Also detected in testis and heart. Very low expression, if any, in brain, liver, spleen, kidney and skeletal muscle.

Its subcellular location is the nucleus. Its pathway is protein modification; protein ubiquitination. Substrate-specific adapter of a BCR (BTB-CUL3-RBX1) E3 ubiquitin-protein ligase complex. The BCR(BACURD3) E3 ubiquitin ligase complex mediates the ubiquitination of target proteins, leading to their degradation by the proteasome. The polypeptide is BTB/POZ domain-containing adapter for CUL3-mediated RhoA degradation protein 3 (Kctd10) (Rattus norvegicus (Rat)).